Consider the following 63-residue polypeptide: MPTGFHRESATIYQFPVKAIRNANRFERARLMEREAAEVCDAALDSCWYHDEAVRESDRPTKS.

Inhibits the synthesis of glutamine synthetase II. In Rhizobium leguminosarum, this protein is Glutamine synthetase translation inhibitor (gstI).